The following is a 313-amino-acid chain: D-beta-D-heptose 7-phosphate kinase (313 aa).

196–199 lines the ATP pocket; sequence NRAE. The active site involves Asp264.

It carries out the reaction D-glycero-beta-D-manno-heptose 7-phosphate + ATP = D-glycero-beta-D-manno-heptose 1,7-bisphosphate + ADP + H(+). The protein operates within nucleotide-sugar biosynthesis; ADP-L-glycero-beta-D-manno-heptose biosynthesis; ADP-L-glycero-beta-D-manno-heptose from D-glycero-beta-D-manno-heptose 7-phosphate: step 1/4. It participates in bacterial outer membrane biogenesis; LPS core biosynthesis. Its function is as follows. Catalyzes the phosphorylation of D-glycero-D-manno-heptose 7-phosphate at the C-1 position to selectively form D-glycero-beta-D-manno-heptose-1,7-bisphosphate. The protein is D-beta-D-heptose 7-phosphate kinase (rfaE) of Bordetella bronchiseptica (strain ATCC BAA-588 / NCTC 13252 / RB50) (Alcaligenes bronchisepticus).